A 618-amino-acid polypeptide reads, in one-letter code: Mitochondrial Rho GTPase 2 (618 aa).

At 1-592 the chain is on the cytoplasmic side; it reads MRRDVRILLL…ELHPSSFWLR (592 aa). The Miro 1 domain occupies 2–168; it reads RRDVRILLLG…FYYAQKAVLH (167 aa). Residues G16, K17, T18, and S19 each contribute to the GTP site. Mg(2+) is bound at residue T18. Residues P35 and D57 each contribute to the Mg(2+) site. S59 lines the GTP pocket. K96 is covalently cross-linked (Glycyl lysine isopeptide (Lys-Gly) (interchain with G-Cter in ubiquitin)). Residues N118, K119, D121, A149, and K150 each contribute to the GTP site. A Glycyl lysine isopeptide (Lys-Gly) (interchain with G-Cter in ubiquitin) cross-link involves residue K119. A Glycyl lysine isopeptide (Lys-Gly) (interchain with G-Cter in ubiquitin) cross-link involves residue K164. 2 EF-hand domains span residues 184–219 and 304–339; these read ACAQ…CFGH and LGYQ…FPAA. Positions 197, 199, 201, 208, 317, 319, 321, and 328 each coordinate Ca(2+). One can recognise a Miro 2 domain in the interval 414-576; sequence RSVLLCKVVG…FTQLATMAAF (163 aa). G426, G428, K429, S430, and A431 together coordinate GTP. The GDP site is built by G426, G428, K429, S430, and A431. S430 contributes to the Mg(2+) binding site. E471 provides a ligand contact to Mg(2+). Positions 525, 527, and 556 each coordinate GTP. Residues K525, D527, and C556 each coordinate GDP. Residues 593–615 form a helical; Anchor for type IV membrane protein membrane-spanning segment; it reads GLLGVVGAAVAAVLSFSLYRVLV. The Mitochondrial intermembrane portion of the chain corresponds to 616–618; it reads KSQ.

Belongs to the mitochondrial Rho GTPase family. Homodimer. Interacts with the kinesin-binding proteins TRAK1/OIP106 and TRAK2/GRIF1, forming a link between mitochondria and the trafficking apparatus of the microtubules. Interacts with ARMCX3. Found in a complex with KIF5B, OGT, RHOT1 and TRAK1. Ubiquitinated by PRKN in a PINK1-dependent manner, leading to its degradation. As to expression, ubiquitously expressed. Highly expressed in heart, liver, skeletal muscle, kidney and pancreas.

It is found in the mitochondrion outer membrane. The enzyme catalyses GTP + H2O = GDP + phosphate + H(+). It carries out the reaction ATP + H2O = ADP + phosphate + H(+). The catalysed reaction is UTP + H2O = UDP + phosphate + H(+). Its function is as follows. Atypical mitochondrial nucleoside-triphosphatase (NTPase) involved in mitochondrial trafficking. Probably involved in control of anterograde transport of mitochondria and their subcellular distribution. Can hydrolyze GTP. Can hydrolyze ATP and UTP. This Homo sapiens (Human) protein is Mitochondrial Rho GTPase 2 (RHOT2).